Reading from the N-terminus, the 845-residue chain is MSFQKVDPAQIESVLSKLTLEEKISLLAGKNFWETQDYPEKGVPPVKTSDGPNGARGATFKGGVTAACFPASSLLAATWDLDAAKHIGEALADETRSKGARVLLAPTVCIHRHPLGGRNFESFSEDPFLAGKLAAQYIKGLQGNGVAATIKHYAANEQETCRFTVNEHITERALREIYLKPFEIAIKESNPLAVMTAYNIVNGTHADSNNFLLRDVLRGEWGWKGLVMSDWGGTNSTADALNAGLDLEMPGPTRWRKVDEVLAVVKSGAVLEETIDERARNVLELLAKLNCFENPTIPEEKAINRPEHQKLIRSVGSQGLVLLKNEGDVLPLRKEILTNKKVALLGFAREALIHGGGSASVNAHYRVTPEEGLRAALGDTVEFEYAKGAHTFRQLPLMSDNVVNLEGQPGWTLDFFADEEPNGEPGSSISSEQPSYIPLFVKESWGSVRASAHFTPTQSGKHYFGMSGLGRSKLLIDGEVIYEQKLNCPDSMGFLLGGVEEPEIQYSFEAGKTYAVEVVSVKPTSKGGLALLDGFIGFRLGFMTEEEHNRDLLSEAVDVAKRSDIAIVFTGHTPDWETEGQDQISFHLPSNGSQDRLVAAVGAANPNTVVVNCTGVAVAMPWLDKVKAVVQAWFPGQEAGNAIADVLTGAVNPSGRLPVSFPRAIEDAPAHGNFPGDYTDGKDNRRHLEVTYKEGVFVGYRHYDLSEANRAKVLFPFGYGLSYTTFTHANHKASATSRNTVEVAVDVTNVGTCAGADVVQVYAGAKLAVPENPVKELVGFAKVHLKPGETKTANITFEVRQLTHFTERSGKWELESGDYEISIGQSVRDITGKVEIGLEAQNYKP.

A glycan (N-linked (GlcNAc...) asparagine) is linked at Asn202. The active site involves Asp230. N-linked (GlcNAc...) asparagine glycosylation occurs at Asn235. The PA14 domain maps to 406 to 557 (EGQPGWTLDF…HNRDLLSEAV (152 aa)). N-linked (GlcNAc...) asparagine glycosylation is found at Asn591, Asn612, and Asn794.

The protein belongs to the glycosyl hydrolase 3 family.

The enzyme catalyses Hydrolysis of terminal, non-reducing beta-D-glucosyl residues with release of beta-D-glucose.. The protein operates within glycan metabolism; cellulose degradation. Its function is as follows. Beta-glucosidases are one of a number of cellulolytic enzymes involved in the degradation of cellulosic biomass. Catalyzes the last step releasing glucose from the inhibitory cellobiose. The sequence is that of Beta-glucosidase B (bglB) from Emericella nidulans (strain FGSC A4 / ATCC 38163 / CBS 112.46 / NRRL 194 / M139) (Aspergillus nidulans).